The chain runs to 157 residues: 2-C-methyl-D-erythritol 2,4-cyclodiphosphate synthase (157 aa).

A divalent metal cation is bound by residues Asp8 and His10. 4-CDP-2-C-methyl-D-erythritol 2-phosphate-binding positions include 8-10 and 34-35; these read DVH and HS. His42 is a binding site for a divalent metal cation. 4-CDP-2-C-methyl-D-erythritol 2-phosphate-binding positions include 56 to 58, 61 to 65, 100 to 106, 132 to 135, Phe139, and Arg142; these read DIG, FPDTD, AQAPKMA, and TTTE.

This sequence belongs to the IspF family. As to quaternary structure, homotrimer. Requires a divalent metal cation as cofactor.

The catalysed reaction is 4-CDP-2-C-methyl-D-erythritol 2-phosphate = 2-C-methyl-D-erythritol 2,4-cyclic diphosphate + CMP. Its pathway is isoprenoid biosynthesis; isopentenyl diphosphate biosynthesis via DXP pathway; isopentenyl diphosphate from 1-deoxy-D-xylulose 5-phosphate: step 4/6. Functionally, involved in the biosynthesis of isopentenyl diphosphate (IPP) and dimethylallyl diphosphate (DMAPP), two major building blocks of isoprenoid compounds. Catalyzes the conversion of 4-diphosphocytidyl-2-C-methyl-D-erythritol 2-phosphate (CDP-ME2P) to 2-C-methyl-D-erythritol 2,4-cyclodiphosphate (ME-CPP) with a corresponding release of cytidine 5-monophosphate (CMP). This Pseudomonas fluorescens (strain SBW25) protein is 2-C-methyl-D-erythritol 2,4-cyclodiphosphate synthase.